Reading from the N-terminus, the 847-residue chain is Putative membrane protein SCO5905 (847 aa).

Helical transmembrane passes span 18-38, 187-207, 215-235, 248-268, 302-322, 326-346, 381-401, 539-559, 562-582, 600-620, 643-663, and 672-692; these read AVVV…APAL, GGDK…LLAI, LVPL…GAIL, ASIM…IITA, IVLA…GFGP, LGVA…VLLL, VKVA…LLGY, DTTL…VLLL, LLAP…TLGA, VTAY…IFIM, TGGV…VLMT, and FGFA…PLLV. The disordered stretch occupies residues 708–729; the sequence is RPGTPQTPSTPTSEPPSADAPA. A run of 3 helical transmembrane segments spans residues 744–764, 778–798, and 808–828; these read FTWI…GMYL, FGTL…LVAI, and TIFA…EIWA.

This sequence belongs to the resistance-nodulation-cell division (RND) (TC 2.A.6) family. MmpL subfamily.

It is found in the cell membrane. The polypeptide is Putative membrane protein SCO5905 (Streptomyces coelicolor (strain ATCC BAA-471 / A3(2) / M145)).